We begin with the raw amino-acid sequence, 355 residues long: Peptide chain release factor 1 (355 aa).

Q233 carries the post-translational modification N5-methylglutamine. Positions 280–293 are enriched in basic and acidic residues; that stretch reads ERRKKEQERADSRR. Residues 280–308 are disordered; the sequence is ERRKKEQERADSRRGQVGSGDRSERIRTY.

The protein belongs to the prokaryotic/mitochondrial release factor family. In terms of processing, methylated by PrmC. Methylation increases the termination efficiency of RF1.

It is found in the cytoplasm. Functionally, peptide chain release factor 1 directs the termination of translation in response to the peptide chain termination codons UAG and UAA. This chain is Peptide chain release factor 1, found in Rickettsia peacockii (strain Rustic).